Consider the following 348-residue polypeptide: tRNA N6-adenosine threonylcarbamoyltransferase (348 aa).

Positions 111 and 115 each coordinate Fe cation. Residues 134-138 (LVSGG), Asp167, Gly180, and Asn276 each bind substrate. Asp304 provides a ligand contact to Fe cation.

It belongs to the KAE1 / TsaD family. Fe(2+) serves as cofactor.

The protein localises to the cytoplasm. It carries out the reaction L-threonylcarbamoyladenylate + adenosine(37) in tRNA = N(6)-L-threonylcarbamoyladenosine(37) in tRNA + AMP + H(+). Functionally, required for the formation of a threonylcarbamoyl group on adenosine at position 37 (t(6)A37) in tRNAs that read codons beginning with adenine. Is involved in the transfer of the threonylcarbamoyl moiety of threonylcarbamoyl-AMP (TC-AMP) to the N6 group of A37, together with TsaE and TsaB. TsaD likely plays a direct catalytic role in this reaction. The chain is tRNA N6-adenosine threonylcarbamoyltransferase from Bordetella petrii (strain ATCC BAA-461 / DSM 12804 / CCUG 43448).